The sequence spans 159 residues: Ribosomal RNA large subunit methyltransferase H (159 aa).

Residues leucine 76, glycine 107, and 126–131 contribute to the S-adenosyl-L-methionine site; that span reads LSSLTL.

It belongs to the RNA methyltransferase RlmH family. As to quaternary structure, homodimer.

It localises to the cytoplasm. It carries out the reaction pseudouridine(1915) in 23S rRNA + S-adenosyl-L-methionine = N(3)-methylpseudouridine(1915) in 23S rRNA + S-adenosyl-L-homocysteine + H(+). Its function is as follows. Specifically methylates the pseudouridine at position 1915 (m3Psi1915) in 23S rRNA. This chain is Ribosomal RNA large subunit methyltransferase H, found in Cupriavidus pinatubonensis (strain JMP 134 / LMG 1197) (Cupriavidus necator (strain JMP 134)).